We begin with the raw amino-acid sequence, 228 residues long: Indole-3-glycerol phosphate synthase (228 aa).

Belongs to the TrpC family.

It carries out the reaction 1-(2-carboxyphenylamino)-1-deoxy-D-ribulose 5-phosphate + H(+) = (1S,2R)-1-C-(indol-3-yl)glycerol 3-phosphate + CO2 + H2O. The protein operates within amino-acid biosynthesis; L-tryptophan biosynthesis; L-tryptophan from chorismate: step 4/5. The polypeptide is Indole-3-glycerol phosphate synthase (Pyrococcus furiosus (strain ATCC 43587 / DSM 3638 / JCM 8422 / Vc1)).